The sequence spans 335 residues: MRVLGIETSCDETGVAVFDSKQGLLADILHSQAKLHAGYGGVVPELASRDHIRKLLPLLRKVLNQAGLNKEDIDGVAYTGGPGLIGALLVGAAVGRSLAWALGKPAIAVHHMEGHLLSPLLEPNPPGFPFCALLISGGHTMLVTVNRIGAYRILGESLDDAVGEAFDKTAKLLQLGYPGGPALAKLAEQGNPDRFYFPRPMLDRPGLNFSFSGLKTYALNTLHKNGSEAAADIARAFQDAVVDTLTVKCRRALQQTGLNRLVVAGGVSANQALRQRLKAMGTQENVQVYYPRLAFCTDNGAMIAFAGCQRLLAGEQTSSGFSVRARWPLDTLPEI.

Fe cation contacts are provided by His111 and His115. Substrate-binding positions include 134–138 (LISGG), Asp167, Gly180, and Asn270. Position 298 (Asp298) interacts with Fe cation.

It belongs to the KAE1 / TsaD family. Fe(2+) is required as a cofactor.

It localises to the cytoplasm. It carries out the reaction L-threonylcarbamoyladenylate + adenosine(37) in tRNA = N(6)-L-threonylcarbamoyladenosine(37) in tRNA + AMP + H(+). Required for the formation of a threonylcarbamoyl group on adenosine at position 37 (t(6)A37) in tRNAs that read codons beginning with adenine. Is involved in the transfer of the threonylcarbamoyl moiety of threonylcarbamoyl-AMP (TC-AMP) to the N6 group of A37, together with TsaE and TsaB. TsaD likely plays a direct catalytic role in this reaction. The polypeptide is tRNA N6-adenosine threonylcarbamoyltransferase (Nitrosococcus oceani (strain ATCC 19707 / BCRC 17464 / JCM 30415 / NCIMB 11848 / C-107)).